The primary structure comprises 308 residues: Elongation factor Ts (308 aa).

Residues 80–83 form an involved in Mg(2+) ion dislocation from EF-Tu region; sequence TDFV.

Belongs to the EF-Ts family.

Its subcellular location is the cytoplasm. In terms of biological role, associates with the EF-Tu.GDP complex and induces the exchange of GDP to GTP. It remains bound to the aminoacyl-tRNA.EF-Tu.GTP complex up to the GTP hydrolysis stage on the ribosome. This Methylobacterium radiotolerans (strain ATCC 27329 / DSM 1819 / JCM 2831 / NBRC 15690 / NCIMB 10815 / 0-1) protein is Elongation factor Ts.